We begin with the raw amino-acid sequence, 261 residues long: DNA repair protein RecO (261 aa).

Belongs to the RecO family.

Involved in DNA repair and RecF pathway recombination. The polypeptide is DNA repair protein RecO (Chlorobium limicola (strain DSM 245 / NBRC 103803 / 6330)).